A 415-amino-acid polypeptide reads, in one-letter code: Arrestin red cell isoform 3 (415 aa).

Belongs to the arrestin family.

It localises to the cytoplasm. The protein is Arrestin red cell isoform 3 of Oncorhynchus mykiss (Rainbow trout).